The sequence spans 1520 residues: MAAPVIIVGSHVWVEDPHLAWIDGEVTRIDGINVHVKTKKGKTVVTNVYFPKDTEAPSGGVDDMTKLSYLHEPGVLRNLETRYELNEIYTYTGNILIAVNPFQRLPHIYETDMMEQYKGIALGELSPHVFAIGDAAYRAMINEGKNNSILVSGESGAGKTETTKMLMRYLAFLGGRSGVEGRTVEQQVLESNPVLEAFGNAKTLRNNNSSRFGKFVEIQFDKNGRISGAAIRTYLLERSRVCQISDPERNYHCFYLLCAAPPEDIKKYKLENPHKFHYLNQSSCYKLDGVDDASEYLETRRAMDVVGISNEEQEAIFRVVAAILHLGNIDFGKGEEIDSSVIKDKDSRSHLNMAAELLMCNAQSLEDALIRRVMVTPEEIITRTLDPDNAIASRDTLAKTIYSHLFDWIVNKINTSIGQDPRSKSIIGVLDIYGFESFKCNSFEQFCINFTNEKLQQHFNQHVFKMEQEEYTKEEIAWSYIEFIDNQDVLELIEKKPGGIISLLDEACMFPKSTHETFSQKLFQTFKEHERFAKPKLSRTDFTISHYAGEVTYQSNHFIDKNKDYIVAEHQALFTASNCKFVAGLFHALHEDSSRSSKFSSIGSRFKQQLHSLMESLNGTEPHYIRCIKPNNVLKPGIFENFNVIHQLRCGGVLEAIRISCAGYPTRLAFYDFLDRFGLLAPEVLEGNYDDKVACQMILDKKSLTDYQIGKTKIFLRAGQMAELDARRAEVLGNAARVIQRQFRTCMARKNYRSIRNAAIVLQSFLRGEIARAVHKKLRIEAAALRVQKNFRRYVDRKSFVTTRSSTIVLQTGLRAMIARSEFRLRRQRKAAIVLQAHWRGRQAFSYYTRLQKAAIVTQCAWRCRLARRELRMLKMAARDTGALKDAKNKLEQRVEELSLRLHLEKRLRTDLEEAKVQEVAKLQEALHTMRLQLKETTAMVVKEQEAARVAIEEASSVNKEPVVVEDTEKIDSLSNEIDRLKGLLSSETHKADEAQHAYQSALVQNEELCKKLEEAGRKIDQLQDSVQRFQEKVFSLESENKVLRQQTLTISPTTRALALRPKTTIIQRTPEKDTFSNGETTQLQEPETEDRPQKSLNQKQQENQELLLKSISEDIGFSEGKPVAACLIYKCLIHWRSFEVERTSIFNRIIETIASAIEMQENSDVLCYWLSNSATLLMFLQRTLKAGATGSITTPRRRGMPSSLFGRVSQSFRGSPQSAGFPFMTGRAIGGGLDELRQVEAKYPALLFKQQLTAFLEKIYGMIRDKMKKEISPLLASCIQVPRTPRSGLVKGRSQNTQNNVVAPKPMIAHWQNIVTCLNGHLRTMRANYVPSLLISKVFGQIFSFINVQLFNSLLLRRECCSFSNGEYVKTGLAELEKWCHDATEEFVGSAWDELKHIRQAVGFLVIHQKPKKSLKEITTELCPVLSIQQLYRISTMYWDDKYGTHSVSTEVIATMRAEVSDVSKSAISNSFLLDDDSSIPFSLDDISKSMQNVEVAEVDPPPLIRQNSNFMFLLERSD.

A Myosin N-terminal SH3-like domain is found at 7–56 (IVGSHVWVEDPHLAWIDGEVTRIDGINVHVKTKKGKTVVTNVYFPKDTEA). Residues 59–729 (GGVDDMTKLS…QMAELDARRA (671 aa)) form the Myosin motor domain. ATP-binding positions include 153–160 (GESGAGKT) and 206–214 (NNNSSRFGK). Actin-binding stretches follow at residues 492 to 526 (LIEK…FQTF), 528 to 551 (EHER…AGEV), 586 to 610 (FHAL…KQQL), and 610 to 632 (LHSL…KPNN). IQ domains follow at residues 732-761 (LGNA…AAIV), 755-784 (IRNA…EAAA), 780-809 (IEAA…STIV), 803-832 (TRSS…RKAA), 828-857 (QRKA…AAIV), and 851-880 (LQKA…AARD). The stretch at 881–1047 (TGALKDAKNK…ESENKVLRQQ (167 aa)) forms a coiled coil. The segment at 1062 to 1100 (PKTTIIQRTPEKDTFSNGETTQLQEPETEDRPQKSLNQK) is disordered. Polar residues predominate over residues 1076–1086 (FSNGETTQLQE). Residues 1148 to 1463 (NRIIETIASA…IATMRAEVSD (316 aa)) enclose the Dilute domain.

The protein belongs to the TRAFAC class myosin-kinesin ATPase superfamily. Myosin family. Plant myosin class XI subfamily. As to quaternary structure, homodimer. Interacts with MYOB1 and MYOB2. Interacts with PHOX1.

The protein localises to the cytoplasm. Its function is as follows. Myosin heavy chain that is required for the cell cycle-regulated transport of various organelles and proteins for their segregation. Functions by binding with its tail domain to receptor proteins on organelles and exerting force with its N-terminal motor domain against actin filaments, thereby transporting its cargo along polarized actin cables. Contributes to the trafficking of Golgi stacks, mitochondria and peroxisomes. Required for development of pavement cells, trichomes, and stigmatic papillae. The protein is Myosin-5 (XI-1) of Arabidopsis thaliana (Mouse-ear cress).